We begin with the raw amino-acid sequence, 446 residues long: Exodeoxyribonuclease 7 large subunit (446 aa).

The protein belongs to the XseA family. In terms of assembly, heterooligomer composed of large and small subunits.

The protein localises to the cytoplasm. The enzyme catalyses Exonucleolytic cleavage in either 5'- to 3'- or 3'- to 5'-direction to yield nucleoside 5'-phosphates.. Functionally, bidirectionally degrades single-stranded DNA into large acid-insoluble oligonucleotides, which are then degraded further into small acid-soluble oligonucleotides. The sequence is that of Exodeoxyribonuclease 7 large subunit from Vibrio cholerae serotype O1 (strain ATCC 39315 / El Tor Inaba N16961).